We begin with the raw amino-acid sequence, 183 residues long: RNA pyrophosphohydrolase (183 aa).

In terms of domain architecture, Nudix hydrolase spans 6–149 (GYRPNVGIIL…KREVYRLALE (144 aa)). Residues 38 to 59 (GGINAGETPEQAMFRELEEEVG) carry the Nudix box motif.

It belongs to the Nudix hydrolase family. RppH subfamily. It depends on a divalent metal cation as a cofactor.

Accelerates the degradation of transcripts by removing pyrophosphate from the 5'-end of triphosphorylated RNA, leading to a more labile monophosphorylated state that can stimulate subsequent ribonuclease cleavage. This is RNA pyrophosphohydrolase from Thiobacillus denitrificans (strain ATCC 25259 / T1).